Here is a 212-residue protein sequence, read N- to C-terminus: MSNLSSLKKLMVGFLSRHNFSNRDYFSGETYLRTFDHYTIIDKVYTTKYGICMELNYVFHIILTNHHIPNYLVKCHKKKSNGDFYDLFHLAIIVELDGSKYFIDVGFGEHFIEPVELNHNSITGNIKVIFNQLENTNISTYDISTNNILILRVTDEPLNNIKHIESNYQKFFHSKPEEFPLCRVLFERKFDAKTNQYIPLVPDYQYIKKANY.

C52 serves as the catalytic Acyl-thioester intermediate. Active-site residues include H89 and D104.

Belongs to the arylamine N-acetyltransferase family.

This is an uncharacterized protein from Acanthamoeba polyphaga (Amoeba).